The chain runs to 114 residues: UPF0060 membrane protein GDI3492/Gdia_2889 (114 aa).

4 helical membrane passes run 8–28 (FAVY…WWCW), 35–55 (AWVL…LTLV), 64–84 (FAAY…LVEG), and 92–112 (AAGV…GRGA).

The protein belongs to the UPF0060 family.

Its subcellular location is the cell inner membrane. This Gluconacetobacter diazotrophicus (strain ATCC 49037 / DSM 5601 / CCUG 37298 / CIP 103539 / LMG 7603 / PAl5) protein is UPF0060 membrane protein GDI3492/Gdia_2889.